The chain runs to 332 residues: Ketol-acid reductoisomerase (NAD(+)) (332 aa).

In terms of domain architecture, KARI N-terminal Rossmann spans 1–186; sequence MEILHDEDVD…HWTKAGILEC (186 aa). Residues 24-27, Glu-46, Asn-55, Ser-57, and 87-90 contribute to the NAD(+) site; these read YGAQ and DEVQ. Residue His-112 is part of the active site. Gly-138 provides a ligand contact to NAD(+). A KARI C-terminal knotted domain is found at 187–332; sequence TFEQETYEDL…AEIRKLFAQK (146 aa). Mg(2+) is bound by residues Asp-195, Glu-199, Glu-231, and Glu-235. Ser-256 serves as a coordination point for substrate.

Belongs to the ketol-acid reductoisomerase family. In terms of assembly, homodimer. Mg(2+) is required as a cofactor.

The catalysed reaction is (2R)-2,3-dihydroxy-3-methylbutanoate + NAD(+) = (2S)-2-acetolactate + NADH + H(+). It functions in the pathway amino-acid biosynthesis; L-isoleucine biosynthesis; L-isoleucine from 2-oxobutanoate: step 2/4. It participates in amino-acid biosynthesis; L-valine biosynthesis; L-valine from pyruvate: step 2/4. Involved in the biosynthesis of branched-chain amino acids (BCAA). Catalyzes an alkyl-migration followed by a ketol-acid reduction of (S)-2-acetolactate (S2AL) to yield (R)-2,3-dihydroxy-isovalerate. In the isomerase reaction, S2AL is rearranged via a Mg-dependent methyl migration to produce 3-hydroxy-3-methyl-2-ketobutyrate (HMKB). In the reductase reaction, this 2-ketoacid undergoes a metal-dependent reduction by NADH to yield (R)-2,3-dihydroxy-isovalerate. This Uncultured archaeon GZfos26G2 protein is Ketol-acid reductoisomerase (NAD(+)).